A 190-amino-acid polypeptide reads, in one-letter code: Nucleoside triphosphate pyrophosphatase (190 aa).

The active-site Proton acceptor is the D69.

This sequence belongs to the Maf family. Requires a divalent metal cation as cofactor.

It localises to the cytoplasm. The enzyme catalyses a ribonucleoside 5'-triphosphate + H2O = a ribonucleoside 5'-phosphate + diphosphate + H(+). The catalysed reaction is a 2'-deoxyribonucleoside 5'-triphosphate + H2O = a 2'-deoxyribonucleoside 5'-phosphate + diphosphate + H(+). Functionally, nucleoside triphosphate pyrophosphatase. May have a dual role in cell division arrest and in preventing the incorporation of modified nucleotides into cellular nucleic acids. In Helicobacter pylori (strain P12), this protein is Nucleoside triphosphate pyrophosphatase.